A 306-amino-acid polypeptide reads, in one-letter code: Low density lipoprotein receptor adapter protein 1 (306 aa).

The residue at position 1 (Met1) is an N-acetylmethionine. Phosphoserine is present on Ser14. A PID domain is found at 44–168 (GMVFSLKYLG…VAQAFKVAFE (125 aa)). The tract at residues 178–204 (EKREKANQEGGDVPGTRRDSTPSLKTS) is disordered. Phosphoserine occurs at positions 197 and 200. The Clathrin box motif lies at 210–214 (LLDLE). The interval 247 to 274 (WELDDGLDEAFSRLAQSRTNPQVLDTGL) is AP-2 complex binding. Positions 255-264 (EAFSRLAQSR) match the [DE]-X(1,2)-F-X-X-[FL]-X-X-X-R motif motif.

In terms of assembly, interacts (via PID domain) with LDLR (via NPXY motifs). Binds to soluble clathrin trimers. Interacts with AP2B1; the interaction mediates the association with the AP-2 complex. Interacts with VLDLR. Interacts with LRP2.

The protein localises to the cytoplasm. In terms of biological role, adapter protein (clathrin-associated sorting protein (CLASP)) required for efficient endocytosis of the LDL receptor (LDLR) in polarized cells such as hepatocytes and lymphocytes, but not in non-polarized cells (fibroblasts). May be required for LDL binding and internalization but not for receptor clustering in coated pits. May facilitate the endocytosis of LDLR and LDLR-LDL complexes from coated pits by stabilizing the interaction between the receptor and the structural components of the pits. May also be involved in the internalization of other LDLR family members. Binds to phosphoinositides, which regulate clathrin bud assembly at the cell surface. Required for trafficking of LRP2 to the endocytic recycling compartment which is necessary for LRP2 proteolysis, releasing a tail fragment which translocates to the nucleus and mediates transcriptional repression. This is Low density lipoprotein receptor adapter protein 1 from Rattus norvegicus (Rat).